The sequence spans 105 residues: Large ribosomal subunit protein eL36 (105 aa).

Belongs to the eukaryotic ribosomal protein eL36 family. Component of the large ribosomal subunit.

The protein resides in the cytoplasm. Its subcellular location is the cytosol. Functionally, component of the large ribosomal subunit. The ribosome is a large ribonucleoprotein complex responsible for the synthesis of proteins in the cell. This Hydrophis hardwickii (Hardwick's spine-bellied seasnake) protein is Large ribosomal subunit protein eL36 (RPL36).